The chain runs to 663 residues: Protein pat-12 (663 aa).

Residues 1–15 (MTSHIATETSVNRWS) are compositionally biased toward polar residues. 4 disordered regions span residues 1-78 (MTSH…SGDY), 367-430 (RFEE…GQET), 517-546 (FRRGSQQQVSPFVEFPPTLPRRGGGGDYRR), and 597-663 (PMPA…RRRR). Residues 367-380 (RFEETRRTEEVERR) show a composition bias toward basic and acidic residues. Residues 381-400 (VQRREKKERRSRHHSSSRHH) show a composition bias toward basic residues. Positions 517-526 (FRRGSQQQVS) are enriched in polar residues. 2 stretches are compositionally biased toward basic and acidic residues: residues 620 to 640 (FNKERHANSGRRSGRDGKPVD) and 649 to 663 (NYKREQTLNDDRRRR).

As to quaternary structure, interacts with vab-10 (via plankin domain). Isoform a: Expressed in the uterus, the vulva, the rectum, mechanosensory neurons and in head and tail neurons. Isoform e: Expressed in spermatheca and weakly in the vulva. Isoform f: Expressed in spermatheca and weakly in the vulva. Isoform i: Expressed in spermatheca and weakly in the vulva.

The protein localises to the apical cell membrane. It is found in the basal cell membrane. The protein resides in the cytoplasm. Its subcellular location is the cell junction. It localises to the hemidesmosome. The protein localises to the cell membrane. It is found in the cytoskeleton. In terms of biological role, required for embryonic morphology and development. Plays both a functional and a structural role in the maintenance and probably biogenesis of fibrous organelles, a hemidesomosome-like junction structure, which ensures muscle stability and muscle connection to the external cuticle. The protein is Protein pat-12 of Caenorhabditis elegans.